We begin with the raw amino-acid sequence, 253 residues long: MRILLSNDDGVHAPGIQTLAKALRKFADVQVVAPDRNRSGASNSLTLESSLRTFTFDNGDIAVQMGTPTDCVYLGVNALMRPRPDIVVSGINAGPNLGDDVIYSGTVAAAMEGRHLGFPALAVSLNGYQHYDTAAAVTCALLRGLSREPLRTGRILNVNVPDLPLAQIKGIRVTRCGSRHPADKVIPQEDPRGNTLYWIGPPGDKYDAGLDTDFAAVDEGYVSVTPLHVDLTAHSAHDVVSDWLDSVGVGTQW.

Residues Asp-8, Asp-9, Ser-39, and Asn-92 each coordinate a divalent metal cation.

This sequence belongs to the SurE nucleotidase family. Requires a divalent metal cation as cofactor.

It localises to the cytoplasm. It catalyses the reaction a ribonucleoside 5'-phosphate + H2O = a ribonucleoside + phosphate. The catalysed reaction is a ribonucleoside 3'-phosphate + H2O = a ribonucleoside + phosphate. It carries out the reaction [phosphate](n) + H2O = [phosphate](n-1) + phosphate + H(+). Nucleotidase with a broad substrate specificity as it can dephosphorylate various ribo- and deoxyribonucleoside 5'-monophosphates and ribonucleoside 3'-monophosphates with highest affinity to 3'-AMP. Also hydrolyzes polyphosphate (exopolyphosphatase activity) with the preference for short-chain-length substrates (P20-25). Might be involved in the regulation of dNTP and NTP pools, and in the turnover of 3'-mononucleotides produced by numerous intracellular RNases (T1, T2, and F) during the degradation of various RNAs. In Salmonella paratyphi A (strain AKU_12601), this protein is 5'/3'-nucleotidase SurE.